A 25-amino-acid polypeptide reads, in one-letter code: Dermaseptin-5.1TR (25 aa).

At Val25 the chain carries Valine amide.

Expressed by the skin glands.

The protein localises to the secreted. Has antimicrobial activity. This chain is Dermaseptin-5.1TR, found in Phyllomedusa trinitatis (Trinidad leaf frog).